The chain runs to 2539 residues: Zinc finger FYVE domain-containing protein 26 (2539 aa).

Phosphoserine is present on residues Ser-297, Ser-615, Ser-619, and Ser-703. Disordered regions lie at residues 594-637 (HLPE…SLGV), 699-724 (ISSRSPPEKPKQESQSCSGSRDGLQS), and 738-806 (WRHK…SLSA). Over residues 764 to 774 (PSLRRGRRTRR) the composition is skewed to basic residues. The segment covering 787–805 (SLESTSSELSTSTSEGSLS) has biased composition (low complexity). Position 800 is a phosphoserine (Ser-800). A coiled-coil region spans residues 868-895 (MFMERYQEVIQELAQVEHKIENQNSDAG). The tract at residues 1267 to 1296 (DLPLSTPSSPRTTENPTLERKPYSSPRDSS) is disordered. The segment covering 1271 to 1282 (STPSSPRTTENP) has biased composition (polar residues). Phosphoserine occurs at positions 1742, 1764, 1780, and 1782. Residues 1754–1808 (ADPETLPRSPSAEFSPAAPPGISSIHSPSLRERSFPPTQPSQEFVPPATPPARHQ) are disordered. Residues 1760–1769 (PRSPSAEFSP) show a composition bias toward low complexity. The FYVE-type zinc finger occupies 1812–1872 (DETESICMVC…VCDQCYSYCN (61 aa)). Positions 1818, 1821, 1835, 1838, 1843, 1846, 1864, and 1867 each coordinate Zn(2+).

Interacts with AP5Z1, AP5B1, AP5S1 and SPG11. Interacts with TTC19 and KIF13A. In terms of tissue distribution, strongest expression in the adrenal gland, bone marrow, adult brain, fetal brain, lung, placenta, prostate, skeletal muscle, testis, thymus, and retina. Intermediate levels are detected in other structures, including the spinal cord.

The protein resides in the cytoplasm. It is found in the cytoskeleton. The protein localises to the microtubule organizing center. It localises to the centrosome. Its subcellular location is the midbody. In terms of biological role, phosphatidylinositol 3-phosphate-binding protein required for the abscission step in cytokinesis: recruited to the midbody during cytokinesis and acts as a regulator of abscission. May also be required for efficient homologous recombination DNA double-strand break repair. The chain is Zinc finger FYVE domain-containing protein 26 (ZFYVE26) from Homo sapiens (Human).